The following is a 650-amino-acid chain: Chaperone protein DnaK (650 aa).

Phosphothreonine; by autocatalysis is present on T200. Residues 614 to 635 (AGAAGAAGAAEGAAHAGGAQQA) form a disordered region.

It belongs to the heat shock protein 70 family.

Acts as a chaperone. This is Chaperone protein DnaK from Burkholderia lata (strain ATCC 17760 / DSM 23089 / LMG 22485 / NCIMB 9086 / R18194 / 383).